Here is a 327-residue protein sequence, read N- to C-terminus: GMP reductase (327 aa).

Residue cysteine 175 is the Thioimidate intermediate of the active site. 204 to 227 (IIADGGIRTNGDVAKSIRFGATMV) is a binding site for NADP(+).

Belongs to the IMPDH/GMPR family. GuaC type 2 subfamily.

It carries out the reaction IMP + NH4(+) + NADP(+) = GMP + NADPH + 2 H(+). Functionally, catalyzes the irreversible NADPH-dependent deamination of GMP to IMP. It functions in the conversion of nucleobase, nucleoside and nucleotide derivatives of G to A nucleotides, and in maintaining the intracellular balance of A and G nucleotides. The chain is GMP reductase from Bacillus anthracis.